The primary structure comprises 508 residues: Flagellin (508 aa).

Belongs to the bacterial flagellin family.

The protein localises to the secreted. It is found in the bacterial flagellum. Flagellin is the subunit protein which polymerizes to form the filaments of bacterial flagella. The chain is Flagellin (fliC) from Salmonella berta.